The sequence spans 5537 residues: Histone-lysine N-methyltransferase 2D (5537 aa).

The tract at residues 1–60 is disordered; it reads MDSQKLAGEDKDSEPAADGPAASEDPSATESDLPNPHVGEVSVLSSGSPRLQETPQDCSG. Residue Ser-27 is modified to Phosphoserine. Over residues 43–57 the composition is skewed to polar residues; that stretch reads VLSSGSPRLQETPQD. Residues 104-149 form a C2HC pre-PHD-type 1; degenerate zinc finger; that stretch reads GPNEAVLPSEDLSQIGFPEGLTPAHLGEPGGSCWAHHWCAAWSAGV. 3 consecutive PHD-type zinc fingers follow at residues 170–218, 226–276, and 273–323; these read QRCS…PEHS, EARC…CKVC, and CKVC…CRVC. The RING-type 1; atypical zinc finger occupies 229–274; that stretch reads CAVCEGPGELCDLFFCTSCGHHYHGACLDTALTARKRAGWQCPECK. The segment at 276–321 adopts an RING-type 2; degenerate zinc-finger fold; the sequence is CQACRKPGNDSKMLVCETCDKGYHTFCLKPPMEELPAHSWKCKACR. Disordered stretches follow at residues 368–387, 393–416, 436–1331, and 1340–1359; these read VCSRFSPPEPGDTPTDEPDA, QGQPKGGHVTSMQPKEPGPLQCEA, EEMP…RLKS, and VVADIDSSPSKEEEEEDDDT. The segment at 439 to 668 is 15 X 5 AA repeats of S/P-P-P-E/P-E/A; that stretch reads PLLPPPEESP…VSRLSPPPEE (230 aa). The segment covering 440-473 has biased composition (pro residues); it reads LLPPPEESPLSPPPEESPTSPPPEASRLSPPPEE. A run of 3 repeats spans residues 442–446, 460–464, and 469–473. Positions 474-483 are enriched in low complexity; that stretch reads LPASPLPEAL. The span at 494–509 shows a compositional bias: pro residues; it reads LSPPPEESPLSPPPES. Repeat copies occupy residues 496-500 and 504-508. Low complexity predominate over residues 510-519; the sequence is SPFSPLEESP. 2 stretches are compositionally biased toward pro residues: residues 520-547 and 554-595; these read LSPPEESPPSPALETPLSPPPEASPLSP and LSPP…PPPE. 5 repeat units span residues 521-525, 555-559, 564-568, 573-577, and 582-586. Residues 596 to 607 are compositionally biased toward low complexity; that stretch reads ASRLFPPFEESP. Over residues 608-649 the composition is skewed to pro residues; the sequence is LSPPPEESPLSPPPEASRLSPPPEDSPMSPPPEESPMSPPPE. 4 consecutive repeat copies span residues 609–613, 618–622, 627–631, and 645–649. Residues 650–662 are compositionally biased toward low complexity; the sequence is VSRLSPLPVVSRL. Repeat unit 15 spans residues 663–667; it reads SPPPE. A compositionally biased stretch (pro residues) spans 663–712; sequence SPPPEESPLSPPPEESPTSPPPEASRLSPPPEDSPTSPPPEDSPASPPPE. Low complexity predominate over residues 713-725; the sequence is DSLMSLPLEESPL. Phosphoserine is present on Ser-744. Basic and acidic residues-rich tracts occupy residues 745–760 and 845–869; these read PRPEEPHLSPRPEEPH and RPEESHLSPELEKPPLSPRPEKPPE. 2 stretches are compositionally biased toward low complexity: residues 889 to 903 and 911 to 928; these read PSLSPLLGEPALSEP and LPEELPLSPSGEPSLSPQ. Over residues 929 to 940 the composition is skewed to pro residues; sequence LMPPDPLPPPLS. Over residues 941–954 the composition is skewed to low complexity; it reads PIITAAAPPALSPL. Over residues 994–1008 the composition is skewed to pro residues; sequence EPVPPMILPPSPGSP. Residues 1048–1057 show a composition bias toward low complexity; the sequence is PLSVPSPLSP. Basic and acidic residues predominate over residues 1068–1080; that stretch reads AELHEMETEKVSE. Ser-1151 carries the post-translational modification Phosphoserine. Thr-1195 bears the Phosphothreonine mark. Residues 1207 to 1216 show a composition bias toward polar residues; it reads EISNLSQGDA. Residue Ser-1249 is modified to Phosphoserine. Thr-1267 carries the post-translational modification Phosphothreonine. Ser-1270 is modified (phosphoserine). 2 stretches are compositionally biased toward basic residues: residues 1289–1302 and 1310–1329; these read GRRRSSPARSRIKQ and GRRRPRGGAHGGRGRGRARL. PHD-type zinc fingers lie at residues 1377 to 1430, 1427 to 1477, and 1504 to 1559; these read QDMC…CIVC, CIVC…CVSC, and LVTC…CQPY. The RING-type 3; atypical zinc-finger motif lies at 1507–1557; sequence CPICHAPYVEEDLLIQCRHCERWMHAGCESLFTEDDVEQAADEGFDCVSCQ. At Ser-1606 the chain carries Phosphoserine. Disordered regions lie at residues 1610-1767, 1793-1889, 1904-2002, and 2165-2683; these read KRRQ…LEDM, GVGR…MESK, EQHL…NQRS, and PQVP…QRQR. Positions 1637 to 1666 are enriched in basic and acidic residues; that stretch reads PDDKKDGDLDTDELLKGEGGVEHMECEIKL. Residue Ser-1671 is modified to Phosphoserine. Positions 1675-1685 are enriched in basic and acidic residues; it reads EPGKEETEESK. 2 stretches are compositionally biased toward basic residues: residues 1702–1712 and 1753–1762; these read RQRKSHTRTKK and KQQRRGRKKS. Basic and acidic residues-rich tracts occupy residues 1806–1825 and 1832–1841; these read AKGDGGSERKELPTSQKGDD and EESRGLEGKA. Ser-1820 and Ser-1834 each carry phosphoserine. Thr-1843 and Thr-1865 each carry phosphothreonine. The span at 1874–1889 shows a compositional bias: basic and acidic residues; the sequence is DLDRISTEELPKMESK. Positions 1979–1990 are enriched in low complexity; it reads TTPSTPTTPTTE. Residues 2190 to 2209 show a composition bias toward pro residues; that stretch reads PTAPPTYPPYPSPTGAPAQP. Position 2239 is a phosphoserine (Ser-2239). Thr-2240 bears the Phosphothreonine mark. Position 2246 is an N6-acetyllysine (Lys-2246). Phosphoserine is present on residues Ser-2260 and Ser-2274. Residues 2280-2292 are compositionally biased toward basic and acidic residues; the sequence is ESRKALEVKKEEL. Phosphoserine is present on residues Ser-2309, Ser-2311, and Ser-2342. Pro residues-rich tracts occupy residues 2350-2365 and 2379-2393; these read QEPPPAQALAPSPPSH and AQPPLTPRPQPPPPE. Low complexity-rich tracts occupy residues 2409 to 2431 and 2494 to 2505; these read SRVPASPQSQSSSQSPLTPRPLS and FPAALPAGPAGE. Arg-2535 carries the asymmetric dimethylarginine modification. The segment covering 2547-2560 has biased composition (pro residues); the sequence is LKPPVPQPGLPPPH. Polar residues predominate over residues 2574–2584; it reads KPQSTNYTVAT. The span at 2589-2609 shows a compositional bias: low complexity; sequence PSGSPLGPSSGSTGESYGLSP. Over residues 2610 to 2621 the composition is skewed to pro residues; it reads LRPPSVLPPPAP. Phosphoserine is present on Ser-2640. Positions 2669-2707 form a coiled coil; sequence MSGLSQTELEKQRQRQRLRELLIRQQIQRNTLRQEKETA. Positions 2686–2690 match the LXXLL motif 1 motif; that stretch reads LRELL. 2 disordered regions span residues 2697 to 2814 and 2835 to 2996; these read RNTL…QQQQ and ARFP…LDDD. Residues 2707–2722 show a composition bias toward low complexity; it reads AAAAAGAVGPPGSWGA. 2 stretches are compositionally biased toward polar residues: residues 2733–2746 and 2781–2790; these read SRGQTPFAGTQDKS and PSSMDVNSRQ. Position 2836 is an asymmetric dimethylarginine (Arg-2836). The span at 2931-2940 shows a compositional bias: pro residues; that stretch reads PQKPSAPPAP. Positions 3038 to 3042 match the LXXLL motif 2 motif; it reads LDDLL. The segment at 3078 to 3110 is disordered; it reads EKAEREALLRGVEPGPLGPEERPPPAADASEPR. Lys-3079 carries the post-translational modification N6-acetyllysine. The residue at position 3130 (Ser-3130) is a Phosphoserine. Disordered stretches follow at residues 3147 to 3209 and 3263 to 3339; these read ANSL…GSSL and KQQL…AHAL. Thr-3197 is modified (phosphothreonine). 3 stretches are compositionally biased toward low complexity: residues 3198-3209, 3263-3289, and 3301-3320; these read PSPLSGPGGSSL, KQQLSAQLQPAQQQQQQQQQHSLLSAP, and GSSPSLAGSQQQLSLGLAGA. Phosphoserine is present on Ser-3199. Positions 3249 to 3282 form a coiled coil; that stretch reads IEDLLEHEKKELQKKQQLSAQLQPAQQQQQQQQQ. The segment covering 3325–3334 has biased composition (pro residues); the sequence is LPQPLMPTQP. Lys-3433 carries the N6-acetyllysine modification. 2 disordered regions span residues 3462 to 3499 and 3596 to 3673; these read LSGGPSSDLQNHVAAGSGQERSAGDPSQPRPNPPTFAQ and RNKQ…GPFL. Positions 3562–3614 form a coiled coil; it reads EKLKLVTEQQSKIQKQLDQVRKQQKEHTNLMAEYRNKQQQQQQQQQQQQQQHS. 2 stretches are compositionally biased toward low complexity: residues 3599-3612 and 3631-3643; these read QQQQQQQQQQQQQQ and LPGQLLPGHGLQP. Residues 3714 to 3750 adopt a coiled-coil conformation; the sequence is RLLQERQLQLQQQRMQLAQKLQQQQQQQQQQQHLLGQ. Position 3727 is an asymmetric dimethylarginine (Arg-3727). Residues 3758 to 3802 are disordered; that stretch reads QQGPGVQTNQALGPKPQGLMPPSSHQGLLVQQLSPQPPQGPQGML. The stretch at 3897–3975 forms a coiled coil; the sequence is LQQLQQQQQL…FQQQQQQQQM (79 aa). Residues 3984 to 4191 form a disordered region; it reads LLSPQQQQQQ…GQGLPGVGIM (208 aa). Low complexity predominate over residues 4012-4023; sequence PGALGPTLLLTG. The segment covering 4024–4045 has biased composition (polar residues); the sequence is KEQNTVDPAVSSEATEGPSTHQ. A compositionally biased stretch (low complexity) spans 4073-4108; that stretch reads SQLLLVQPQPQPQPSSLQLQPPLRLPGQQQQQVSLL. Residues 4111–4120 are compositionally biased toward gly residues; it reads AGGGSHGQLG. The span at 4137–4154 shows a compositional bias: polar residues; that stretch reads PSVSLGDQPGSMTQNLLG. Position 4198 is an asymmetric dimethylarginine (Arg-4198). Ser-4215 is subject to Phosphoserine. The LXXLL motif 3 signature appears at 4222–4226; it reads LQALL. Disordered regions lie at residues 4233–4398 and 4410–4452; these read QSQA…VPGH and ASQL…LLLA. A compositionally biased stretch (polar residues) spans 4237-4251; that stretch reads VRQTPPYQEPGTQTS. Residues 4252–4282 are compositionally biased toward low complexity; the sequence is PLQGLLGCQPQLGGFPGPQTGPLQELGAGPR. The LXXLL motif 4 motif lies at 4253 to 4257; that stretch reads LQGLL. Pro residues predominate over residues 4283–4293; sequence PQGPPRLPAPP. Composition is skewed to low complexity over residues 4294–4305 and 4320–4331; these read GALSTGPVLGPV and PSQLPSPSSQLP. Pro residues predominate over residues 4338-4357; the sequence is PTHPGTPKPQGPTLEPPPGR. Position 4359 is a phosphoserine (Ser-4359). The LXXLL motif 5 signature appears at 4463–4467; it reads LQKLL. The residue at position 4465 (Lys-4465) is an N6-acetyllysine. Disordered regions lie at residues 4503-4544 and 4613-4727; these read QGTP…KEDG and KNNL…HLGS. Over residues 4619–4633 the composition is skewed to pro residues; that stretch reads PPTPPSSLPPTPPPS. A compositionally biased stretch (basic and acidic residues) spans 4648 to 4673; it reads LGEHPKDAASARDSERALRDTSEVKS. Position 4738 is a phosphoserine (Ser-4738). Lys-4756 is covalently cross-linked (Glycyl lysine isopeptide (Lys-Gly) (interchain with G-Cter in SUMO2)). N6-acetyllysine is present on Lys-4776. Residues Ser-4822 and Ser-4849 each carry the phosphoserine modification. The tract at residues 4822–4857 is disordered; it reads SPARAGTEPKKGEAEGPGGKEKGLEGKSPDTGPDWL. Over residues 4828 to 4849 the composition is skewed to basic and acidic residues; the sequence is TEPKKGEAEGPGGKEKGLEGKS. Lys-4880 is covalently cross-linked (Glycyl lysine isopeptide (Lys-Gly) (interchain with G-Cter in SUMO2)). Residues 4905 to 4980 form a disordered region; sequence QLSAPPPEEP…GEDSRPPRLK (76 aa). Residues 4908 to 4931 show a composition bias toward pro residues; the sequence is APPPEEPSPPPSPLAPSPASPPTE. Positions 4932-4941 are enriched in low complexity; it reads PLVELPTEPL. Residues 4966–4976 are compositionally biased toward basic and acidic residues; the sequence is RPPEEGEDSRP. An LXXLL motif 6 motif is present at residues 4990–4994; it reads LRLLL. Residues 5029 to 5069 form a C2HC pre-PHD-type 2 zinc finger; the sequence is MRRCCFCHEEGDGATDGPARLLNLDLDLWVHLNCALWSTEV. Residues 5090–5137 form a PHD-type 7 zinc finger; the sequence is TKCSLCQRTGATSSCNRMRCPNVYHFACAIRAKCMFFKDKTMLCPMHK. The FYR N-terminal domain maps to 5175-5235; it reads LHMFRVGGLV…CCYRCSIGEN (61 aa). The FYR C-terminal domain occupies 5236-5321; it reads NGRPEFVIKV…ESCQNYLFRY (86 aa). A WDR5 interaction motif (WIN) motif is present at residues 5337–5342; it reads GCARSE. Residues 5397–5513 form the SET domain; the sequence is NNVYLARSRI…KGEELTYDYQ (117 aa). Residues Tyr-5451 and 5474–5475 contribute to the S-adenosyl-L-methionine site; that span reads NH. Zn(2+) is bound by residues Cys-5477, Cys-5525, Cys-5527, and Cys-5532. A Post-SET domain is found at 5521–5537; that stretch reads HKIPCHCGAWNCRKWMN.

This sequence belongs to the class V-like SAM-binding methyltransferase superfamily. Histone-lysine methyltransferase family. TRX/MLL subfamily. As to quaternary structure, component of the MLL2 complex (also named ASCOM complex), at least composed of catalytic subunit KMT2D/MLL2, ASH2L, RBBP5, WDR5, NCOA6, DPY30, KDM6A, PAXIP1/PTIP, PAGR1 and alpha- and beta-tubulin. Forms a core complex with the evolutionary conserved subcomplex WRAD composed of WDR5, RBBP5, ASH2L/ASH2 and DPY30 subunits; WRAD differentially stimulates the methyltransferase activity. Interacts with ESR1; interaction is direct. Interacts (via WIN motif) with WDR5. Expressed in most adult tissues, including a variety of hematoipoietic cells, with the exception of the liver.

Its subcellular location is the nucleus. It catalyses the reaction L-lysyl(4)-[histone H3] + S-adenosyl-L-methionine = N(6)-methyl-L-lysyl(4)-[histone H3] + S-adenosyl-L-homocysteine + H(+). Histone methyltransferase that catalyzes methyl group transfer from S-adenosyl-L-methionine to the epsilon-amino group of 'Lys-4' of histone H3 (H3K4). Part of chromatin remodeling machinery predominantly forms H3K4me1 methylation marks at active chromatin sites where transcription and DNA repair take place. Acts as a coactivator for estrogen receptor by being recruited by ESR1, thereby activating transcription. This chain is Histone-lysine N-methyltransferase 2D (KMT2D), found in Homo sapiens (Human).